We begin with the raw amino-acid sequence, 220 residues long: Adenylate kinase (220 aa).

12–17 (GAGKGT) lines the ATP pocket. Residues 32–62 (STGDIFRDIVKKENDELGKKIKEIMEKGELV) form an NMP region. AMP is bound by residues T33, R38, 60–62 (ELV), 88–91 (GYPR), and Q95. Residues 129–166 (SRRICPKCGRIYNMISLPPKEDELCDDCKVKLVQRDDD) form an LID region. R130 contributes to the ATP binding site. Zn(2+) contacts are provided by C133 and C136. 139–140 (IY) serves as a coordination point for ATP. Positions 153 and 156 each coordinate Zn(2+). The AMP site is built by R163 and R174. Residue I202 participates in ATP binding.

It belongs to the adenylate kinase family. As to quaternary structure, monomer.

The protein resides in the cytoplasm. It carries out the reaction AMP + ATP = 2 ADP. Its pathway is purine metabolism; AMP biosynthesis via salvage pathway; AMP from ADP: step 1/1. Its function is as follows. Catalyzes the reversible transfer of the terminal phosphate group between ATP and AMP. Plays an important role in cellular energy homeostasis and in adenine nucleotide metabolism. The chain is Adenylate kinase from Thermotoga neapolitana.